Consider the following 333-residue polypeptide: Biotin synthase (333 aa).

The Radical SAM core domain occupies 51 to 278; that stretch reads RAIQLSTLMS…KSYVRLSAGR (228 aa). Cysteine 66, cysteine 70, and cysteine 73 together coordinate [4Fe-4S] cluster. Positions 110, 141, 201, and 273 each coordinate [2Fe-2S] cluster.

It belongs to the radical SAM superfamily. Biotin synthase family. In terms of assembly, homodimer. [4Fe-4S] cluster is required as a cofactor. Requires [2Fe-2S] cluster as cofactor.

The enzyme catalyses (4R,5S)-dethiobiotin + (sulfur carrier)-SH + 2 reduced [2Fe-2S]-[ferredoxin] + 2 S-adenosyl-L-methionine = (sulfur carrier)-H + biotin + 2 5'-deoxyadenosine + 2 L-methionine + 2 oxidized [2Fe-2S]-[ferredoxin]. It participates in cofactor biosynthesis; biotin biosynthesis; biotin from 7,8-diaminononanoate: step 2/2. Functionally, catalyzes the conversion of dethiobiotin (DTB) to biotin by the insertion of a sulfur atom into dethiobiotin via a radical-based mechanism. The sequence is that of Biotin synthase from Haemophilus influenzae (strain 86-028NP).